We begin with the raw amino-acid sequence, 83 residues long: Cytochrome b559 subunit alpha (83 aa).

A helical membrane pass occupies residues 21 to 35 (VIHSITIPSLFIAGW). His23 serves as a coordination point for heme.

It belongs to the PsbE/PsbF family. Heterodimer of an alpha subunit and a beta subunit. PSII is composed of 1 copy each of membrane proteins PsbA, PsbB, PsbC, PsbD, PsbE, PsbF, PsbH, PsbI, PsbJ, PsbK, PsbL, PsbM, PsbT, PsbX, PsbY, PsbZ, Psb30/Ycf12, at least 3 peripheral proteins of the oxygen-evolving complex and a large number of cofactors. It forms dimeric complexes. The cofactor is heme b.

Its subcellular location is the plastid. It localises to the chloroplast thylakoid membrane. In terms of biological role, this b-type cytochrome is tightly associated with the reaction center of photosystem II (PSII). PSII is a light-driven water:plastoquinone oxidoreductase that uses light energy to abstract electrons from H(2)O, generating O(2) and a proton gradient subsequently used for ATP formation. It consists of a core antenna complex that captures photons, and an electron transfer chain that converts photonic excitation into a charge separation. The polypeptide is Cytochrome b559 subunit alpha (Piper cenocladum (Ant piper)).